The primary structure comprises 285 residues: MKYIGAHVSAAGGLANAPARAAEIGATAFALFTKNQRQWRAAPLTPQVIDDFKIACEKYHFSAAQILPHDSYLINLGHPVSEALEKSRVAFLDEMQRCEQLGLTLLNFHPGSHLMQIAQEDCLARIAESINIALAQTEGVTAVIENTAGQGSNLGFEFEQLAAIIDGVEDKSRVGVCIDTCHAFAAGYDLRTPEACEKTFAGFGKIVGFQYLRGMHLNDAKSAFGSRVDRHHSLGEGNIGHDAFRWIMQDARFDGIPLILETINPDIWAEEIAWLKAQQIAEAVA.

Zn(2+) is bound by residues His69, His109, Glu145, Asp179, His182, His216, Asp229, His231, and Glu261.

This sequence belongs to the AP endonuclease 2 family. Zn(2+) serves as cofactor.

It carries out the reaction Endonucleolytic cleavage to 5'-phosphooligonucleotide end-products.. Endonuclease IV plays a role in DNA repair. It cleaves phosphodiester bonds at apurinic or apyrimidinic (AP) sites, generating a 3'-hydroxyl group and a 5'-terminal sugar phosphate. This is Probable endonuclease 4 from Salmonella schwarzengrund (strain CVM19633).